A 179-amino-acid polypeptide reads, in one-letter code: Peptidyl-tRNA hydrolase (179 aa).

Position 15 (tyrosine 15) interacts with tRNA. Residue histidine 20 is the Proton acceptor of the active site. The tRNA site is built by tyrosine 66, asparagine 68, and asparagine 114.

This sequence belongs to the PTH family. In terms of assembly, monomer.

The protein resides in the cytoplasm. It carries out the reaction an N-acyl-L-alpha-aminoacyl-tRNA + H2O = an N-acyl-L-amino acid + a tRNA + H(+). In terms of biological role, hydrolyzes ribosome-free peptidyl-tRNAs (with 1 or more amino acids incorporated), which drop off the ribosome during protein synthesis, or as a result of ribosome stalling. Functionally, catalyzes the release of premature peptidyl moieties from peptidyl-tRNA molecules trapped in stalled 50S ribosomal subunits, and thus maintains levels of free tRNAs and 50S ribosomes. The protein is Peptidyl-tRNA hydrolase of Chlamydia muridarum (strain MoPn / Nigg).